A 329-amino-acid chain; its full sequence is MMSSSSSEIDVVKTRIPTYDEDDNTVLYAYETKPEFVNKEPNIVSDVSCNTEEQQKTVNDVLIHCQVIYDAMQNLDKKIDVIRRKVSKIQRFYVKSLWTNRKRYGYKKYSYRLAKKLKLKKMKKNEVYESFSYPESYSPTLPVSRCENNSPSNFPRPSFCMEEYRRAEPEEDPILSRTPSPVHPSDFSEHNYQPYYASDGATYGSSSGTCRGNPRADGIHNTYSTDHASAAPPSVARSPFENDRYIEEGSITKHPSTWSVEAVVLFLKQTDPLALCPLIDLFRSHEIDGKALLLLTSDVLLKHLGVKLGTAVKLCYYIDRLKQGKCFEN.

2 positions are modified to phosphoserine: serine 138 and serine 238. The 68-residue stretch at 258 to 325 (WSVEAVVLFL…YYIDRLKQGK (68 aa)) folds into the SAM domain.

This sequence belongs to the SCM family.

The protein localises to the nucleus. Putative Polycomb group (PcG) protein. PcG proteins act by forming multiprotein complexes, which are required to maintain the transcriptionally repressive state of homeotic genes throughout development. May be involved in spermatogenesis during sexual maturation. This is Sex comb on midleg-like protein 1 (SCML1) from Hoolock hoolock (Western hoolock gibbon).